We begin with the raw amino-acid sequence, 467 residues long: A-type ATP synthase subunit B (467 aa).

The interval 95 to 114 (GKGQPRDHMPLPPPEDFRDV) is disordered.

It belongs to the ATPase alpha/beta chains family. Has multiple subunits with at least A(3), B(3), C, D, E, F, H, I and proteolipid K(x).

It is found in the cell membrane. Its function is as follows. Component of the A-type ATP synthase that produces ATP from ADP in the presence of a proton gradient across the membrane. The B chain is a regulatory subunit. In Pyrobaculum islandicum (strain DSM 4184 / JCM 9189 / GEO3), this protein is A-type ATP synthase subunit B.